A 153-amino-acid polypeptide reads, in one-letter code: 6,7-dimethyl-8-ribityllumazine synthase (153 aa).

5-amino-6-(D-ribitylamino)uracil is bound by residues phenylalanine 22, 56–58 (AFE), and 80–82 (TVI). 85–86 (ST) serves as a coordination point for (2S)-2-hydroxy-3-oxobutyl phosphate. Histidine 88 functions as the Proton donor in the catalytic mechanism. 5-amino-6-(D-ribitylamino)uracil is bound at residue phenylalanine 113. Arginine 127 is a (2S)-2-hydroxy-3-oxobutyl phosphate binding site.

The protein belongs to the DMRL synthase family. In terms of assembly, forms an icosahedral capsid composed of 60 subunits, arranged as a dodecamer of pentamers.

The catalysed reaction is (2S)-2-hydroxy-3-oxobutyl phosphate + 5-amino-6-(D-ribitylamino)uracil = 6,7-dimethyl-8-(1-D-ribityl)lumazine + phosphate + 2 H2O + H(+). Its pathway is cofactor biosynthesis; riboflavin biosynthesis; riboflavin from 2-hydroxy-3-oxobutyl phosphate and 5-amino-6-(D-ribitylamino)uracil: step 1/2. Catalyzes the formation of 6,7-dimethyl-8-ribityllumazine by condensation of 5-amino-6-(D-ribitylamino)uracil with 3,4-dihydroxy-2-butanone 4-phosphate. This is the penultimate step in the biosynthesis of riboflavin. The polypeptide is 6,7-dimethyl-8-ribityllumazine synthase (Actinobacillus pleuropneumoniae serotype 5b (strain L20)).